Reading from the N-terminus, the 342-residue chain is Pre-mRNA-splicing factor 18 (342 aa).

At M1 the chain carries N-acetylmethionine.

This sequence belongs to the PRP18 family. As to quaternary structure, heterodimer with PPIH. Interacts with PRPF4 and with the spliceosome. Part of a complex containing U4/U6 snRNPs.

The protein localises to the nucleus speckle. In terms of biological role, participates in the second step of pre-mRNA splicing. The polypeptide is Pre-mRNA-splicing factor 18 (PRPF18) (Bos taurus (Bovine)).